The sequence spans 225 residues: Cell division protein SepF (225 aa).

The interval 22-116 (EYLDEPEPAR…TRGALAVDTR (95 aa)) is disordered. Basic and acidic residues-rich tracts occupy residues 28-54 (EPAR…RDFA) and 77-86 (RYDGPRHSSR).

It belongs to the SepF family. In terms of assembly, homodimer. Interacts with FtsZ.

The protein localises to the cytoplasm. Functionally, cell division protein that is part of the divisome complex and is recruited early to the Z-ring. Probably stimulates Z-ring formation, perhaps through the cross-linking of FtsZ protofilaments. Its function overlaps with FtsA. This chain is Cell division protein SepF, found in Rhodococcus jostii (strain RHA1).